Here is a 602-residue protein sequence, read N- to C-terminus: Glutamyl-tRNA(Gln) amidotransferase subunit B, mitochondrial (602 aa).

The transit peptide at 1–52 (MLQQWLRQSPAAAGLLRCSRYRGPQAALLQLSPQRAPTYHAIRSLQTSAAES) directs the protein to the mitochondrion. Residues 61-83 (QLKQGAKGLKAQKRQRRESEEAS) form a disordered region.

This sequence belongs to the GatB/GatE family. GatB subfamily. Subunit of the heterotrimeric GatCAB amidotransferase (AdT) complex, composed of A, B and C subunits.

The protein localises to the mitochondrion. It catalyses the reaction L-glutamyl-tRNA(Gln) + L-glutamine + ATP + H2O = L-glutaminyl-tRNA(Gln) + L-glutamate + ADP + phosphate + H(+). In terms of biological role, allows the formation of correctly charged Gln-tRNA(Gln) through the transamidation of misacylated Glu-tRNA(Gln) in the mitochondria. The reaction takes place in the presence of glutamine and ATP through an activated gamma-phospho-Glu-tRNA(Gln). The sequence is that of Glutamyl-tRNA(Gln) amidotransferase subunit B, mitochondrial from Aspergillus clavatus (strain ATCC 1007 / CBS 513.65 / DSM 816 / NCTC 3887 / NRRL 1 / QM 1276 / 107).